Reading from the N-terminus, the 357-residue chain is Protein RecA (357 aa).

Residue 78–85 (GPESSGKT) participates in ATP binding.

It belongs to the RecA family.

It localises to the cytoplasm. Its function is as follows. Can catalyze the hydrolysis of ATP in the presence of single-stranded DNA, the ATP-dependent uptake of single-stranded DNA by duplex DNA, and the ATP-dependent hybridization of homologous single-stranded DNAs. It interacts with LexA causing its activation and leading to its autocatalytic cleavage. This Cereibacter sphaeroides (strain ATCC 17029 / ATH 2.4.9) (Rhodobacter sphaeroides) protein is Protein RecA.